The following is a 359-amino-acid chain: Outer membrane protein A (359 aa).

Positions 1–21 are cleaved as a signal peptide; the sequence is MKKTAIALAVALAGFATVAQA. The next 8 membrane-spanning stretches (beta stranded) occupy residues 27–37, 62–73, 77–85, 103–114, 119–127, 154–163, 168–175, and 194–202; these read TWYTGAKLGWS, QLGAGAFLGYQA, LGFELGYDW, QGVQLAAKLSYP, LDIYTRLGG, PLAAVGVEYA, WATRLDYQ, and MLSLGVSYR. 5 repeat units span residues 210-211, 212-213, 214-215, 216-217, and 218-219. A 5 X 2 AA tandem repeats of A-P region spans residues 210 to 219; it reads APAPAPAPAP. In terms of domain architecture, OmpA-like spans 221–351; the sequence is VETKRFTLKS…RVEIEVKGIK (131 aa). The cysteines at positions 322 and 336 are disulfide-linked.

This sequence belongs to the outer membrane OOP (TC 1.B.6) superfamily. OmpA family. Monomer and homodimer.

The protein resides in the cell outer membrane. Functionally, with TolR probably plays a role in maintaining the position of the peptidoglycan cell wall in the periplasm. Acts as a porin with low permeability that allows slow penetration of small solutes; an internal gate slows down solute passage. The sequence is that of Outer membrane protein A from Serratia marcescens.